The following is a 354-amino-acid chain: UPF0283 membrane protein HI_0043 (354 aa).

The next 3 membrane-spanning stretches (helical) occupy residues 57 to 77, 87 to 107, and 211 to 231; these read LLKFTALLFGLATVAQSVQWI, IYLAFALVSLIIILLGIKEII, and ESAVIVAISPLAVVDMFFIAW.

The protein belongs to the UPF0283 family.

The protein resides in the cell inner membrane. This is UPF0283 membrane protein HI_0043 from Haemophilus influenzae (strain ATCC 51907 / DSM 11121 / KW20 / Rd).